We begin with the raw amino-acid sequence, 308 residues long: Elongation factor Ts (308 aa).

Residues 79 to 82 (TDFV) form an involved in Mg(2+) ion dislocation from EF-Tu region.

The protein belongs to the EF-Ts family.

It localises to the cytoplasm. In terms of biological role, associates with the EF-Tu.GDP complex and induces the exchange of GDP to GTP. It remains bound to the aminoacyl-tRNA.EF-Tu.GTP complex up to the GTP hydrolysis stage on the ribosome. This is Elongation factor Ts from Bdellovibrio bacteriovorus (strain ATCC 15356 / DSM 50701 / NCIMB 9529 / HD100).